The sequence spans 90 residues: Cell division topological specificity factor (90 aa).

Belongs to the MinE family.

In terms of biological role, prevents the cell division inhibition by proteins MinC and MinD at internal division sites while permitting inhibition at polar sites. This ensures cell division at the proper site by restricting the formation of a division septum at the midpoint of the long axis of the cell. This Brucella abortus (strain S19) protein is Cell division topological specificity factor.